The sequence spans 198 residues: MDTLAPESTRQNLRSQRLNLLTNEPHQRLESLVKSKEPFASRDNFARFVAAQYLFQHDLEPLYRNEALARLFPGLASRARDDAARADLADLGHPVPEGDQSVREADLSLAEALGWLFVSEGSKLGAAFLFKKAAALELDENFGARHLAEPEGGRAQGWKSFVAILDGIELNEEEERLAAKGASDAFNRFGDLLERTFA.

H26 is a heme b binding site.

This sequence belongs to the heme oxygenase family.

The catalysed reaction is heme b + 3 AH2 + 3 O2 + 2 H(+) = biliverdin IXbeta + CO + Fe(2+) + 3 A + 3 H2O. It carries out the reaction heme b + 3 AH2 + 3 O2 + 3 H(+) = biliverdin IXdelta + CO + Fe(2+) + 3 A + 3 H2O. Involved in heme degradation. Catalyzes the degradation of heme to biliverdin, with the release of iron. Forms biliverdin delta (70%) and beta (30%). Under anaerobic conditions ferredoxin--NADP(+) reductase (fpr) can provide the necessary electrons; Bfd is not required. The sequence is that of Heme oxygenase PigA from Pseudomonas aeruginosa (strain ATCC 15692 / DSM 22644 / CIP 104116 / JCM 14847 / LMG 12228 / 1C / PRS 101 / PAO1).